The chain runs to 494 residues: Monocarboxylate transporter 1 (494 aa).

At 1 to 22 (MPPAIGGPVGYTPPDGGWGWAV) the chain is on the cytoplasmic side. Residues 23 to 44 (VVGAFISIGFSYAFPKSITVFF) form a helical membrane-spanning segment. Residue Lys-38 participates in (S)-lactate binding. At 45 to 55 (KEIEIIFSATT) the chain is on the extracellular side. The helical transmembrane segment at 56–80 (SEVSWISSIMLAVMYAGGPISSILV) threads the bilayer. At 81-84 (NKYG) the chain is on the cytoplasmic side. The chain crosses the membrane as a helical span at residues 85 to 105 (SRPVMIAGGCLSGCGLIAASF). The Extracellular segment spans residues 106-109 (CNTV). The helical transmembrane segment at 110–132 (QELYFCIGVIGGLGLAFNLNPAL) threads the bilayer. Residues 133 to 146 (TMIGKYFYKKRPLA) are Cytoplasmic-facing. The chain crosses the membrane as a helical span at residues 147–169 (NGLAMAGSPVFLSTLAPLNQAFF). The Extracellular portion of the chain corresponds to 170 to 174 (GIFGW). A helical transmembrane segment spans residues 175-194 (RGSFLILGGLLLNCCVAGSL). At 195–254 (MRPIGPQQGKVEKLKSKESLQEAGKSDANTDLIGGSPKGEKLSVFQTVNKFLDLSLFTHR) the chain is on the cytoplasmic side. Ser-210, Ser-213, and Ser-220 each carry phosphoserine. Position 224 is a phosphothreonine (Thr-224). Phosphoserine is present on Ser-230. A helical transmembrane segment spans residues 255–281 (GFLLYLSGNVVMFFGLFTPLVFLSNYG). Residues 282-288 (KSKHFSS) are Extracellular-facing. The chain crosses the membrane as a helical span at residues 289–310 (EKSAFLLSILAFVDMVARPSMG). A H(+)-binding site is contributed by Asp-302. Arg-306 provides a ligand contact to (S)-lactate. Over 311-321 (LAANTRWIRPR) the chain is Cytoplasmic. Residues 322–342 (VQYFFAASVVANGVCHLLAPL) form a helical membrane-spanning segment. Topologically, residues 343 to 346 (STTY) are extracellular. A helical transmembrane segment spans residues 347–368 (VGFCIYAGVFGFAFGWLSSVLF). Topologically, residues 369 to 382 (ETLMDLVGPQRFSS) are cytoplasmic. The chain crosses the membrane as a helical span at residues 383–403 (AVGLVTIVECCPVLLGPPLLG). Over 404–414 (RLNDMYGDYKY) the chain is Extracellular. The chain crosses the membrane as a helical span at residues 415–436 (TYWACGVILIIAGLYLFIGMGI). The Cytoplasmic segment spans residues 437 to 494 (NYRLVAKEQKAEEKKRDGKEDETSTDVDEKPKKTMKETQSPAPLQNSSGDPAEEESPV). Basic and acidic residues predominate over residues 446-472 (KAEEKKRDGKEDETSTDVDEKPKKTMK). The disordered stretch occupies residues 446-494 (KAEEKKRDGKEDETSTDVDEKPKKTMKETQSPAPLQNSSGDPAEEESPV). Thr-459 carries the phosphothreonine modification. Residue Ser-460 is modified to Phosphoserine. Residue Thr-461 is modified to Phosphothreonine. A compositionally biased stretch (polar residues) spans 473–485 (ETQSPAPLQNSSG). Phosphoserine occurs at positions 476, 483, 484, and 492.

The protein belongs to the major facilitator superfamily. Monocarboxylate porter (TC 2.A.1.13) family. Interacts with BSG. Interacts with EMB. Interaction with either BSG or EMB is required for expression at the cell membrane. In terms of tissue distribution, detected in erythrocytes (at protein level). Detected in brain, heart, kidney, lung, muscle, jejunum enterocytes and brain capillaries.

The protein localises to the cell membrane. Its subcellular location is the basolateral cell membrane. The protein resides in the apical cell membrane. The enzyme catalyses (S)-lactate(in) + H(+)(in) = (S)-lactate(out) + H(+)(out). It catalyses the reaction pyruvate(out) + H(+)(out) = pyruvate(in) + H(+)(in). The catalysed reaction is acetoacetate(out) + H(+)(out) = acetoacetate(in) + H(+)(in). It carries out the reaction (S)-3-hydroxybutanoate(out) + H(+)(out) = (S)-3-hydroxybutanoate(in) + H(+)(in). The enzyme catalyses (R)-3-hydroxybutanoate(out) + H(+)(out) = (R)-3-hydroxybutanoate(in) + H(+)(in). It catalyses the reaction 3-methyl-2-oxobutanoate(out) + H(+)(out) = 3-methyl-2-oxobutanoate(in) + H(+)(in). The catalysed reaction is 4-methyl-2-oxopentanoate(out) + H(+)(out) = 4-methyl-2-oxopentanoate(in) + H(+)(in). Its activity is regulated as follows. Inhibited by stilbene disulfonates, such as di-isothiocyanostilbene disulfonate(DIDS), a cross-linking reagent that forms covalent linkages with lysine groups. In terms of biological role, bidirectional proton-coupled monocarboxylate transporter. Catalyzes the rapid transport across the plasma membrane of many monocarboxylates such as lactate, pyruvate, acetate and the ketone bodies acetoacetate and beta-hydroxybutyrate, and thus contributes to the maintenance of intracellular pH. The transport direction is determined by the proton motive force and the concentration gradient of the substrate monocarboxylate. MCT1 is a major lactate exporter. Plays a role in cellular responses to a high-fat diet by modulating the cellular levels of lactate and pyruvate that contribute to the regulation of central metabolic pathways and insulin secretion, with concomitant effects on plasma insulin levels and blood glucose homeostasis. Facilitates the protonated monocarboxylate form of succinate export, that its transient protonation upon muscle cell acidification in exercising muscle and ischemic heart. Functions via alternate outward- and inward-open conformation states. Protonation and deprotonation of 302-Asp is essential for the conformational transition. The protein is Monocarboxylate transporter 1 (Slc16a1) of Rattus norvegicus (Rat).